The sequence spans 330 residues: Zinc finger protein sdz-12 (330 aa).

5 C2H2-type zinc fingers span residues 27–48 (PQCQVCKRKFANQKTLRTHMKH), 63–85 (FRCENCEKQFTNKPNLKRHQITH), 91–113 (KKCSTCQRTFFREDQLQRHLHNH), 120–144 (FDCPVLNCSMQFVFYEGVENHLVNH), and 153–176 (APCGKCHKLFGSPRHLLVHYHFDH). Positions 183–195 (SAPAPTSSARLSP) are enriched in low complexity. The tract at residues 183-203 (SAPAPTSSARLSPITVSTSGS) is disordered. The C2H2-type 6 zinc finger occupies 271–293 (FECKHCTIKFHDATMSIMHNALH).

The protein belongs to the krueppel C2H2-type zinc-finger protein family. As to expression, expressed in the somatic gonad.

Functionally, together with ehn-3, may play a role in gonadogenesis. This chain is Zinc finger protein sdz-12, found in Caenorhabditis elegans.